The primary structure comprises 881 residues: MSNTEKNLPTKYDHMSVEEGLYQWWLEGKYFEATGDEKKQPYTIVIPPPNVTGKLHLGHAWDTTLQDILTRTKRMQGYDVLWLPGMDHAGIATQAKVEGKLREEGISRYDLGREKFLEKAWEWKEEYASHIRQQWGKVGLGLDYSRERFTLDKGLSDAVNKVFVQLYEKGLIYRGEYIINWDPATRTALSDIEVIHKEVQGAFYHMNYPLTDGSGHIRLATTRPETMLGDTAVAVHPEDDRYKHLIGKTVTLPIVGREIPIIADEYVEKDFGTGVVKITPAHDPNDFEVGNRHDLPRILVMNEDGSMNEKAGKYNGMDRFECRKALVKDLQEAGVLVEIEPHMHSVGHSERSGAVVEPYLSTQWFVKMAPLAEKAIELQQKEEEKVTFVPDRFENTYLRWMENIHDWCISRQLWWGHRIPAWYHKETGEVYVGTEAPADIENWNQDNDVLDTWFSSALWPFSTLGWPNEDAADFKRYYSTDALVTGYDIIFFWVSRMIFQGLEFTGERPFKDVLIHGLVRDEQGRKMSKSLGNGIDPMDVIEKYGADAMRFFLSTGSAPGQDLRFSMEKVESTWNFINKIWNASRFVLMNMDDMKFEEIDLTGEKSVADKWILTRLNETIESVTRNMDKYEFGEAGRSLYNFIWDDFCDWYIEMAKLPLYGEDEAAKKTTRSILSYVLDQTMRLLHPFMPFVTEKIWQHLPHEGESITVAAWPTVREDLQDTEAAAEMHLLVDIIRSVRNIRAEVNTPMSKKVQMQIKAKDEAVLAQLTKNSSYIERFCNPSELTIQTDLQAPEKAMTAIVTGAELFLPLADLINLDEERARLEKELEKFDKEVERVQKKLSNQGFVAKAPAAVIEGERAKEQDYLEKREAVRQRLADLEK.

A 'HIGH' region motif is present at residues 49–59 (PNVTGKLHLGH). Residues 526 to 530 (KMSKS) carry the 'KMSKS' region motif. Lys529 lines the ATP pocket. Positions 810–881 (LADLINLDEE…VRQRLADLEK (72 aa)) form a coiled coil.

It belongs to the class-I aminoacyl-tRNA synthetase family. ValS type 1 subfamily. In terms of assembly, monomer.

Its subcellular location is the cytoplasm. The catalysed reaction is tRNA(Val) + L-valine + ATP = L-valyl-tRNA(Val) + AMP + diphosphate. In terms of biological role, catalyzes the attachment of valine to tRNA(Val). As ValRS can inadvertently accommodate and process structurally similar amino acids such as threonine, to avoid such errors, it has a 'posttransfer' editing activity that hydrolyzes mischarged Thr-tRNA(Val) in a tRNA-dependent manner. This chain is Valine--tRNA ligase, found in Bacillus thuringiensis subsp. konkukian (strain 97-27).